The following is a 256-amino-acid chain: Omega-amidase YafV (256 aa).

Residues 4 to 234 (LKITLLQQPL…ATRIDAELSM (231 aa)) enclose the CN hydrolase domain. The active-site Proton acceptor is the glutamate 42. Lysine 107 is a catalytic residue. The active-site Nucleophile is the cysteine 141.

This sequence belongs to the carbon-nitrogen hydrolase superfamily. NIT1/NIT2 family.

The catalysed reaction is a monoamide of a dicarboxylate + H2O = a dicarboxylate + NH4(+). Its function is as follows. Hydrolyzes alpha-ketoglutaramate (a-KGM) to alpha-ketoglutarate (alpha-KG) and ammonia (specific activity 6.65 umol/min/mg), has weak activity on L-glutamine, almost no activity on deaminated glutathione (dGSH) and none on glutathione. May function as a metabolite repair enzyme. This chain is Omega-amidase YafV (yafV), found in Escherichia coli (strain B / BL21-DE3).